Reading from the N-terminus, the 635-residue chain is ATP-dependent zinc metalloprotease FtsH (635 aa).

Topologically, residues 1–4 are cytoplasmic; sequence MVKN. A helical membrane pass occupies residues 5–25; sequence LVLWVVVAVIMMTAYQSFNSS. Over 26–97 the chain is Periplasmic; the sequence is SVENSTDYTT…VEGTPFERRG (72 aa). A helical transmembrane segment spans residues 98–118; it reads FLSQILISWFPMLFLVGVWVF. The Cytoplasmic portion of the chain corresponds to 119–635; it reads FMRQMQGGGG…AVENTDDFNV (517 aa). 191–198 provides a ligand contact to ATP; it reads GPPGTGKT. His413 contributes to the Zn(2+) binding site. Residue Glu414 is part of the active site. His417 and Asp491 together coordinate Zn(2+). A disordered region spans residues 593–635; that stretch reads NREPVTPPSGWGEPKTQQAAYANSTTNDTKPESAVENTDDFNV. Over residues 607 to 620 the composition is skewed to polar residues; the sequence is KTQQAAYANSTTND.

It in the central section; belongs to the AAA ATPase family. The protein in the C-terminal section; belongs to the peptidase M41 family. Homohexamer. Requires Zn(2+) as cofactor.

Its subcellular location is the cell inner membrane. In terms of biological role, acts as a processive, ATP-dependent zinc metallopeptidase for both cytoplasmic and membrane proteins. Plays a role in the quality control of integral membrane proteins. The protein is ATP-dependent zinc metalloprotease FtsH of Haemophilus influenzae (strain ATCC 51907 / DSM 11121 / KW20 / Rd).